A 122-amino-acid chain; its full sequence is Beta-2-microglobulin (122 aa).

Positions 1-22 (MMARIFILALLGQLCFLPYLDA) are cleaved as a signal peptide. The Ig-like C1-type domain occupies 27 to 115 (PKVQVYSRHP…HLTLQEPKVV (89 aa)). An intrachain disulfide couples cysteine 47 to cysteine 102.

This sequence belongs to the beta-2-microglobulin family. Heterodimer of an alpha chain and a beta chain. Beta-2-microglobulin is the beta-chain of major histocompatibility complex class I molecules.

It is found in the secreted. Its function is as follows. Component of the class I major histocompatibility complex (MHC). Involved in the presentation of peptide antigens to the immune system. The chain is Beta-2-microglobulin (B2M) from Trichosurus vulpecula (Brush-tailed possum).